The primary structure comprises 207 residues: MPKVIGLTGGIASGKSTVSELLSVFGFKVVDADKAAREAVKKGSKGLAQVREVFGDEAIDENGEMNRRYMGDLVFNHPEKRLELNAIIHPIVRDIMEEEKQEYLKQGYNVIMDIPLLFENELENTVDEVWVVYTSESIQMDRLMQRNNLSLEDAKARVYSQISIDKKSRMADHVIDNLGDKLELKQNLERLLEEEGYIEKPNYGEED.

A DPCK domain is found at 4–203 (VIGLTGGIAS…EEGYIEKPNY (200 aa)). 12 to 17 (ASGKST) serves as a coordination point for ATP.

Belongs to the CoaE family.

Its subcellular location is the cytoplasm. It catalyses the reaction 3'-dephospho-CoA + ATP = ADP + CoA + H(+). It participates in cofactor biosynthesis; coenzyme A biosynthesis; CoA from (R)-pantothenate: step 5/5. Its function is as follows. Catalyzes the phosphorylation of the 3'-hydroxyl group of dephosphocoenzyme A to form coenzyme A. The sequence is that of Dephospho-CoA kinase from Staphylococcus aureus (strain USA300).